Here is a 223-residue protein sequence, read N- to C-terminus: Ribosome maturation factor RimM (223 aa).

Over residues 1 to 12 (MARRPGSSSRGP) the composition is skewed to low complexity. 2 disordered regions span residues 1 to 44 (MARR…DPGL) and 203 to 223 (VADP…DDPG). One can recognise a PRC barrel domain in the interval 135–210 (DEDEFFLTDL…KVVADPPDDL (76 aa)).

The protein belongs to the RimM family. As to quaternary structure, binds ribosomal protein uS19.

It is found in the cytoplasm. An accessory protein needed during the final step in the assembly of 30S ribosomal subunit, possibly for assembly of the head region. Essential for efficient processing of 16S rRNA. May be needed both before and after RbfA during the maturation of 16S rRNA. It has affinity for free ribosomal 30S subunits but not for 70S ribosomes. The protein is Ribosome maturation factor RimM of Methylorubrum extorquens (strain CM4 / NCIMB 13688) (Methylobacterium extorquens).